A 183-amino-acid polypeptide reads, in one-letter code: Protein vem-1 (183 aa).

The helical transmembrane segment at 9–29 (FTMYDAVFLVVVLGFFFYWLT) threads the bilayer. In terms of domain architecture, Cytochrome b5 heme-binding spans 47 to 146 (MSDMTVEELR…FKYLTVGRLV (100 aa)).

The protein belongs to the cytochrome b5 family. MAPR subfamily. Interacts with unc-40 (via cytoplasmic domain). As to expression, expressed in the AVG pioneer midline neuron and in several nerve ring neurons that extend projecting axons into the right ventral nerve cord.

It localises to the membrane. It is found in the cell projection. The protein localises to the axon. In terms of biological role, transmembrane protein required for the axon guidance of a subset of ventral nerve cord-associated interneurons and motor neurons. May function with the netrin receptor unc-40 in axon guidance. The polypeptide is Protein vem-1 (Caenorhabditis elegans).